Here is a 315-residue protein sequence, read N- to C-terminus: Methionyl-tRNA formyltransferase (315 aa).

The tract at residues 2 to 189 (SESLRIIFAG…LITTLKQLAD (188 aa)) is N-terminal domain. 113–116 (SLLP) lines the (6S)-5,6,7,8-tetrahydrofolate pocket. Positions 210–315 (KEEARIDWSL…EWFVPGNRLV (106 aa)) are C-terminal domain.

The protein belongs to the Fmt family.

It catalyses the reaction L-methionyl-tRNA(fMet) + (6R)-10-formyltetrahydrofolate = N-formyl-L-methionyl-tRNA(fMet) + (6S)-5,6,7,8-tetrahydrofolate + H(+). In terms of biological role, attaches a formyl group to the free amino group of methionyl-tRNA(fMet). The formyl group appears to play a dual role in the initiator identity of N-formylmethionyl-tRNA by promoting its recognition by IF2 and preventing the misappropriation of this tRNA by the elongation apparatus. This chain is Methionyl-tRNA formyltransferase, found in Escherichia coli O157:H7.